A 341-amino-acid polypeptide reads, in one-letter code: N-acetyl-gamma-glutamyl-phosphate reductase (341 aa).

C147 is an active-site residue.

The protein belongs to the NAGSA dehydrogenase family. Type 1 subfamily.

It localises to the cytoplasm. The catalysed reaction is N-acetyl-L-glutamate 5-semialdehyde + phosphate + NADP(+) = N-acetyl-L-glutamyl 5-phosphate + NADPH + H(+). Its pathway is amino-acid biosynthesis; L-arginine biosynthesis; N(2)-acetyl-L-ornithine from L-glutamate: step 3/4. Its function is as follows. Catalyzes the NADPH-dependent reduction of N-acetyl-5-glutamyl phosphate to yield N-acetyl-L-glutamate 5-semialdehyde. The chain is N-acetyl-gamma-glutamyl-phosphate reductase from Dehalococcoides mccartyi (strain ATCC BAA-2266 / KCTC 15142 / 195) (Dehalococcoides ethenogenes (strain 195)).